The following is a 577-amino-acid chain: Arginine--tRNA ligase (577 aa).

Residues 132-142 carry the 'HIGH' region motif; the sequence is ANPTGPLHVGH.

This sequence belongs to the class-I aminoacyl-tRNA synthetase family. In terms of assembly, monomer.

Its subcellular location is the cytoplasm. It carries out the reaction tRNA(Arg) + L-arginine + ATP = L-arginyl-tRNA(Arg) + AMP + diphosphate. This is Arginine--tRNA ligase from Herminiimonas arsenicoxydans.